The primary structure comprises 448 residues: 4-hydroxybenzoate transporter PcaK (448 aa).

The Cytoplasmic segment spans residues 1–30 (MNSPSLPAVERLDVQAFINAQPLSPYQWRI). A helical membrane pass occupies residues 31-51 (VLLCFLIVFLDGLDTAAMGFI). The Periplasmic portion of the chain corresponds to 52-67 (APALTQDWGIDRASLG). A helical transmembrane segment spans residues 68 to 88 (PVMSAALIGMVFGALGSGPLA). Over 89 to 94 (DRYGRK) the chain is Cytoplasmic. The helical transmembrane segment at 95-115 (LVLVAAVFLFGLFSLASAYST) threads the bilayer. Topologically, residues 116-119 (NVEQ) are periplasmic. The helical transmembrane segment at 120–140 (LLALRFLTGLGLGAAMPNATT) threads the bilayer. Residues 141–152 (LLSEYTPERLKS) are Cytoplasmic-facing. Residues 153–173 (LLVTSMFCGFNLGMACGGFVS) form a helical membrane-spanning segment. Residues 174-184 (AKLIPLFGWHS) are Periplasmic-facing. A helical transmembrane segment spans residues 185–205 (LLLLGGLLPLVLAVVLLFRLP). Over 206-261 (ESARYLVVRNRGSERVRQVLAPIAPAQVALARSFHVPEQQTVQARNVFAVIFSGTY) the chain is Cytoplasmic. Residues 262–282 (SAGTLLLWLTYFMGLVIVYLL) form a helical membrane-spanning segment. Over 283-301 (TSWLPTLMRDSGASLEQAA) the chain is Periplasmic. Residues 302 to 322 (FIGALFQFGGVLSAVAVGWAM) traverse the membrane as a helical segment. At 323 to 329 (DRFNPHK) the chain is on the cytoplasmic side. A helical membrane pass occupies residues 330–350 (VIGLFYLLAGVFAWCVGQSLG). Position 351 (Gln-351) is a topological domain, periplasmic. The chain crosses the membrane as a helical span at residues 352-372 (VTLLATLVLLAGMCINGAQSA). Residues 373 to 398 (MPSLAARFYPTQGRATGVSWMLGIGR) lie on the Cytoplasmic side of the membrane. The helical transmembrane segment at 399–419 (FGAILGAWIGATLLGLGWNFE) threads the bilayer. At 420–421 (QV) the chain is on the periplasmic side. A helical membrane pass occupies residues 422–442 (LTALVLPAALATAAVLLKGLV). The Cytoplasmic portion of the chain corresponds to 443-448 (SHADAG).

This sequence belongs to the major facilitator superfamily. Aromatic acid:H(+) symporter (AAHS) (TC 2.A.1.15) family.

Its subcellular location is the cell inner membrane. In terms of biological role, transports 4-hydroxybenzoate (4-HBA) and protocatechuate across the membrane. Driven by the proton motive force. Also functions as a chemoreceptor, which is required for chemotaxis to aromatic acids. The protein is 4-hydroxybenzoate transporter PcaK (pcaK) of Pseudomonas aeruginosa (strain ATCC 15692 / DSM 22644 / CIP 104116 / JCM 14847 / LMG 12228 / 1C / PRS 101 / PAO1).